The chain runs to 325 residues: Cell division protein ZipA (325 aa).

Over 1–5 (MQELR) the chain is Periplasmic. Residues 6 to 26 (LVLILVGALAIAALLFHGLWT) form a helical membrane-spanning segment. The Cytoplasmic segment spans residues 27-325 (SRKETSSKFG…KQRVKVFCRK (299 aa)).

This sequence belongs to the ZipA family. In terms of assembly, interacts with FtsZ via their C-terminal domains.

The protein localises to the cell inner membrane. Its function is as follows. Essential cell division protein that stabilizes the FtsZ protofilaments by cross-linking them and that serves as a cytoplasmic membrane anchor for the Z ring. Also required for the recruitment to the septal ring of downstream cell division proteins. This Aliivibrio fischeri (strain MJ11) (Vibrio fischeri) protein is Cell division protein ZipA.